The chain runs to 659 residues: Pollen receptor-like kinase 6 (659 aa).

An N-terminal signal peptide occupies residues 1–26 (MAAAVLNPGFFLLILLLSFSISPSLQ). The Extracellular portion of the chain corresponds to 27–266 (YVSESEPLVR…SVPETSNKAA (240 aa)). C58 and C67 form a disulfide bridge. LRR repeat units follow at residues 95–118 (LPNLKTIRLDNNLLSGPLPHFFKL), 120–142 (GLKSLMLSNNSFSGEIRDDFFKD), 143–167 (MSKLKRLFLDHNKFEGSIPSSITQL), 168–190 (PQLEELHMQSNNLTGEIPPEFGS), and 192–214 (KNLKVLDLSTNSLDGIVPQSIAD). N128 carries N-linked (GlcNAc...) asparagine glycosylation. Residue N179 is glycosylated (N-linked (GlcNAc...) asparagine). N221 carries N-linked (GlcNAc...) asparagine glycosylation. The tract at residues 226-242 (EYLCGPVVDVGCENIEL) is LURE peptides binding. C229 and C237 form a disulfide bridge. The tract at residues 241–260 (ELNDPQEGQPPSKPSSSVPE) is disordered. The chain crosses the membrane as a helical span at residues 267 to 287 (INAIMVSISLLLLFFIIVGVI). Residues 288 to 659 (KRRNKKKNPD…AVRRIEQVKT (372 aa)) lie on the Cytoplasmic side of the membrane. The disordered stretch occupies residues 312 to 354 (VRISESSSTTAKRSTDSSRKRGGHSDDGSTKKGVSNIGKGGNG). Residues 324 to 341 (RSTDSSRKRGGHSDDGST) show a composition bias toward basic and acidic residues. One can recognise a Protein kinase domain in the interval 384–659 (KAAAEVLGNG…AVRRIEQVKT (276 aa)). ATP is bound by residues 390-398 (LGNGSLGSA) and K412. The residue at position 464 (S464) is a Phosphoserine. Phosphothreonine is present on residues T484 and T557. S561 carries the phosphoserine modification.

The protein belongs to the protein kinase superfamily. Ser/Thr protein kinase family. Interacts with ROPGEF8, ROPGEF9, ROPGEF12, ROPGEF13, PRK3, LIP1 and LIP2. Binds to LURE peptides via its LRR repeats; interacts with LURE1.1, LURE1.2, LURE1.3 and LURE1.4. As to expression, expressed specifically in the pollen tube, predominantly at the tip.

It localises to the cell membrane. The protein resides in the cytoplasmic granule. In terms of biological role, key receptor for sensing species-specific attractants in cooperation with other pollen receptor-like kinases. Essential for pollen tube reorientation toward attractant peptides. In Arabidopsis thaliana (Mouse-ear cress), this protein is Pollen receptor-like kinase 6.